Here is a 91-residue protein sequence, read N- to C-terminus: Putative 26S proteasome complex subunit sem-1 (91 aa).

A disordered region spans residues 1 to 73 (MASTQPKNDA…SWDDDDTSDD (73 aa)). Residues 8–28 (NDAKSTEPKPEQPVTEKKTAV) are compositionally biased toward basic and acidic residues. Acidic residues-rich tracts occupy residues 29–48 (LEEDDEFEDFPVDDWEAEDT) and 63–72 (ESWDDDDTSD).

The protein belongs to the DSS1/SEM1 family. Part of the 26S proteasome.

Its function is as follows. Subunit of the 26S proteasome which plays a role in ubiquitin-dependent proteolysis. The polypeptide is Putative 26S proteasome complex subunit sem-1 (sem-1) (Neurospora crassa (strain ATCC 24698 / 74-OR23-1A / CBS 708.71 / DSM 1257 / FGSC 987)).